The sequence spans 123 residues: MPTINQLVRKGRVAITAKSKVPALEACPQKRGVCTRVYTTTPKKPNSALRKVCKVRLTNGFEVISYIGGEGHNLQEHSVVLIRGGRVKDLPGVRYHTVRGSLDTAGVKDRKQARSKYGAKRPK.

Asp89 bears the 3-methylthioaspartic acid mark. Residues Thr104–Lys123 form a disordered region. A compositionally biased stretch (basic residues) spans Ala113–Lys123.

The protein belongs to the universal ribosomal protein uS12 family. Part of the 30S ribosomal subunit. Contacts proteins S8 and S17. May interact with IF1 in the 30S initiation complex.

Functionally, with S4 and S5 plays an important role in translational accuracy. In terms of biological role, interacts with and stabilizes bases of the 16S rRNA that are involved in tRNA selection in the A site and with the mRNA backbone. Located at the interface of the 30S and 50S subunits, it traverses the body of the 30S subunit contacting proteins on the other side and probably holding the rRNA structure together. The combined cluster of proteins S8, S12 and S17 appears to hold together the shoulder and platform of the 30S subunit. The sequence is that of Small ribosomal subunit protein uS12 from Chromobacterium violaceum (strain ATCC 12472 / DSM 30191 / JCM 1249 / CCUG 213 / NBRC 12614 / NCIMB 9131 / NCTC 9757 / MK).